The sequence spans 131 residues: Profilin-1 (131 aa).

The protein belongs to the profilin family. Occurs in many kinds of cells as a complex with monomeric actin in a 1:1 ratio.

It is found in the cytoplasm. It localises to the cytoskeleton. Functionally, binds to actin and affects the structure of the cytoskeleton. At high concentrations, profilin prevents the polymerization of actin, whereas it enhances it at low concentrations. By binding to PIP2, it inhibits the formation of IP3 and DG. In Triticum aestivum (Wheat), this protein is Profilin-1 (PRO1).